The primary structure comprises 742 residues: Protein-lysine N-methyltransferase SMYD4 (742 aa).

110–112 (RSA) provides a ligand contact to S-adenosyl-L-methionine. The SET domain occupies 230-569 (SSLSLNFSTE…SGQEIFHCYG (340 aa)). Residues cysteine 295, cysteine 298, cysteine 308, cysteine 311, cysteine 317, cysteine 321, histidine 330, and cysteine 334 each coordinate Zn(2+). An MYND-type zinc finger spans residues 295–334 (CHHCLKQLLASIPCCGCSYAKYCSQNCADVAWEQYHRTEC). S-adenosyl-L-methionine is bound by residues asparagine 418, 534–535 (NH), and tyrosine 568.

It belongs to the class V-like SAM-binding methyltransferase superfamily.

The protein localises to the nucleus. Its subcellular location is the cytoplasm. The catalysed reaction is L-lysyl-[protein] + S-adenosyl-L-methionine = N(6)-methyl-L-lysyl-[protein] + S-adenosyl-L-homocysteine + H(+). Its function is as follows. Protein-lysine N-methyltransferase. Monomethylates PRMT5, modulating its transcriptional activity. May also act as a histone methyltransferase. Plays a critical role in cardiac development. Acts as a key epigenetic regulator of gene expression during cardiac development via its dual activities as a methyltransferase and negative regulator of HDAC1. The protein is Protein-lysine N-methyltransferase SMYD4 (SMYD4) of Gallus gallus (Chicken).